The primary structure comprises 964 residues: Translation initiation factor IF-2 (964 aa).

The disordered stretch occupies residues alanine 35–methionine 353. Residues lysine 64 to threonine 108 show a composition bias toward low complexity. Positions proline 124–alanine 133 are enriched in pro residues. The span at alanine 145–threonine 155 shows a compositional bias: basic and acidic residues. Positions asparagine 166–lysine 178 are enriched in pro residues. Positions proline 220–aspartate 233 are enriched in low complexity. Composition is skewed to gly residues over residues glycine 234–proline 252 and glycine 290–glycine 333. Positions arginine 337–lysine 346 are enriched in basic residues. The tr-type G domain occupies lysine 459–aspartate 631. The G1 stretch occupies residues glycine 468–threonine 475. A GTP-binding site is contributed by glycine 468–threonine 475. The interval glycine 493–glycine 497 is G2. The tract at residues aspartate 518 to glycine 521 is G3. Residues aspartate 518 to histidine 522 and asparagine 572 to aspartate 575 contribute to the GTP site. Residues asparagine 572–aspartate 575 are G4. A G5 region spans residues serine 608 to lysine 610.

This sequence belongs to the TRAFAC class translation factor GTPase superfamily. Classic translation factor GTPase family. IF-2 subfamily.

The protein localises to the cytoplasm. Its function is as follows. One of the essential components for the initiation of protein synthesis. Protects formylmethionyl-tRNA from spontaneous hydrolysis and promotes its binding to the 30S ribosomal subunits. Also involved in the hydrolysis of GTP during the formation of the 70S ribosomal complex. The polypeptide is Translation initiation factor IF-2 (Corynebacterium efficiens (strain DSM 44549 / YS-314 / AJ 12310 / JCM 11189 / NBRC 100395)).